A 123-amino-acid chain; its full sequence is uncharacterized protein (123 aa).

This is an uncharacterized protein from Bacillus subtilis (strain 168).